A 447-amino-acid polypeptide reads, in one-letter code: Putative branched-chain amino acid carrier protein SAB1263c (447 aa).

12 helical membrane-spanning segments follow: residues 6-26 (WVIG…IFPP), 40-60 (ILAF…VGAL), 74-94 (PKFS…LFAI), 114-134 (SSIA…YICL), 143-163 (IGSL…IKGY), 193-213 (GYLT…VNAV), 229-249 (LTAG…LGYI), 290-310 (LLGI…IGAV), 326-346 (FVLV…NAVI), 350-370 (IPVL…ILIA), 382-402 (IPVI…LGWL), and 417-437 (LEWF…GIFV).

The protein belongs to the branched chain amino acid transporter family.

It is found in the cell membrane. In terms of biological role, component of the transport system for branched-chain amino acids (leucine, isoleucine and valine), which is coupled to a proton motive force (Potential). Contributes to NaCl tolerance. This chain is Putative branched-chain amino acid carrier protein SAB1263c, found in Staphylococcus aureus (strain bovine RF122 / ET3-1).